The following is a 528-amino-acid chain: Dihydromonacolin L monooxygenase LovA (528 aa).

The Cytoplasmic portion of the chain corresponds to 1–23; the sequence is MTVDALTQPHHLLSLAWNDTQQH. The helical; Signal-anchor for type II membrane protein transmembrane segment at 24-44 threads the bilayer; that stretch reads GSWFAPLVTTSAGLLCLLLYL. Residues 45–528 lie on the Lumenal side of the membrane; it reads CSSGRRSDLP…DEDIRLPGSL (484 aa). Residue Cys-465 coordinates heme.

This sequence belongs to the cytochrome P450 family. Heme serves as cofactor.

Its subcellular location is the membrane. It is found in the endoplasmic reticulum membrane. The catalysed reaction is dihydromonacolin L carboxylate + reduced [NADPH--hemoprotein reductase] + O2 = monacolin L carboxylate + oxidized [NADPH--hemoprotein reductase] + 2 H2O + H(+). It carries out the reaction monacolin L carboxylate + reduced [NADPH--hemoprotein reductase] + O2 = monacolin J carboxylate + oxidized [NADPH--hemoprotein reductase] + H2O + H(+). The protein operates within polyketide biosynthesis; lovastatin biosynthesis. In terms of biological role, dihydromonacolin L monooxygenase; part of the gene cluster that mediates the biosynthesis of lovastatin (also known as mevinolin, mevacor or monacolin K), a hypolipidemic inhibitor of (3S)-hydroxymethylglutaryl-coenzyme A (HMG-CoA) reductase (HMGR). The first step in the biosynthesis of lovastatin is the production of dihydromonacolin L acid by the lovastatin nonaketide synthase lovB and the trans-acting enoyl reductase lovC via condensation of one acetyl-CoA unit and 8 malonyl-CoA units. Dihydromonacolin L acid is released from lovB by the thioesterase lovG. Next, dihydromonacolin L acid is oxidized by the dihydromonacolin L monooxygenase lovA twice to form monacolin J acid. The 2-methylbutyrate moiety of lovastatin is synthesized by the lovastatin diketide synthase lovF via condensation of one acetyl-CoA unit and one malonyl-CoA unit. Finally, the covalent attachment of this moiety to monacolin J acid is catalyzed by the transesterase lovD to yield lovastatin. LovD has broad substrate specificity and can also convert monacolin J to simvastatin using alpha-dimethylbutanoyl-S-methyl-3-mercaptopropionate (DMB-S-MMP) as the thioester acyl donor, and can also catalyze the reverse reaction and function as hydrolase in vitro. LovD has much higher activity with LovF-bound 2-methylbutanoate than with free diketide substrates. The polypeptide is Dihydromonacolin L monooxygenase LovA (Aspergillus terreus).